A 344-amino-acid chain; its full sequence is Lipase chaperone (344 aa).

Residues 14–34 (VAVYGAVGLAAIAGVAIWSGA) traverse the membrane as a helical segment. Over residues 45 to 57 (LSADAAARDGASA) the composition is skewed to low complexity. The segment at 45–78 (LSADAAARDGASAAPPPPARPASAGMPSPLAGSS) is disordered.

This sequence belongs to the lipase chaperone family.

The protein localises to the cell inner membrane. Functionally, may be involved in the folding of the extracellular lipase during its passage through the periplasm. This is Lipase chaperone from Burkholderia ambifaria (strain ATCC BAA-244 / DSM 16087 / CCUG 44356 / LMG 19182 / AMMD) (Burkholderia cepacia (strain AMMD)).